Here is a 581-residue protein sequence, read N- to C-terminus: Oligo-1,6-glucosidase IMA5 (581 aa).

Asp210 (nucleophile) is an active-site residue. Residue Glu272 is the Proton donor of the active site.

The protein belongs to the glycosyl hydrolase 13 family.

The catalysed reaction is Hydrolysis of (1-&gt;6)-alpha-D-glucosidic linkages in some oligosaccharides produced from starch and glycogen by alpha-amylase, and in isomaltose.. Its function is as follows. Alpha-glucosidase with specificity for isomaltose, maltose, and palatinose. In Saccharomyces cerevisiae (strain ATCC 204508 / S288c) (Baker's yeast), this protein is Oligo-1,6-glucosidase IMA5 (IMA5).